A 314-amino-acid chain; its full sequence is Methionyl-tRNA formyltransferase (314 aa).

Residue 110–113 (SLLP) participates in (6S)-5,6,7,8-tetrahydrofolate binding.

It belongs to the Fmt family.

The catalysed reaction is L-methionyl-tRNA(fMet) + (6R)-10-formyltetrahydrofolate = N-formyl-L-methionyl-tRNA(fMet) + (6S)-5,6,7,8-tetrahydrofolate + H(+). Functionally, attaches a formyl group to the free amino group of methionyl-tRNA(fMet). The formyl group appears to play a dual role in the initiator identity of N-formylmethionyl-tRNA by promoting its recognition by IF2 and preventing the misappropriation of this tRNA by the elongation apparatus. In Bacillus mycoides (strain KBAB4) (Bacillus weihenstephanensis), this protein is Methionyl-tRNA formyltransferase.